Reading from the N-terminus, the 983-residue chain is Nuclear factor NF-kappa-B p105 subunit (983 aa).

The 326-residue stretch at 47–372 (PYLQIIEQPK…EVQRKRQKLM (326 aa)) folds into the RHD domain. Cysteine 66 carries the post-translational modification S-nitrosocysteine. Position 342 is a phosphoserine; by PKA (serine 342). The Nuclear localization signal motif lies at 365–370 (QRKRQK). Residues 377–397 (DGYGGGSGAGGGGMFGGGGGG) form a GRR region. A disordered region spans residues 423–454 (KSNAGMKHELSNSTVKKDEESSDKQSDKWDTK). Over residues 428–454 (MKHELSNSTVKKDEESSDKQSDKWDTK) the composition is skewed to basic and acidic residues. ANK repeat units lie at residues 540-569 (NGDNVLHLSIIHLHRELVKNLLEVMPDMNY), 579-608 (LYQTPLHLAVITKQAEVVEDLLKAGANVNL), 612-641 (HGNSVLHLAAAEGDDKILSLLLKHQKASSM), 648-677 (EGLSAIHMVVTANSLSCLKLLIAAGVDVNA), 682-712 (SGRTALHLAVEQENVPLAGCLLLEGDADVDS), 716-745 (DGTTPLHIAAGRGFTKLAAVLKAAGADPHV), and 769-799 (PGTTPLDMAANWEVYDILNGKPYIAAAAVSE). The 88-residue stretch at 804-891 (QGPLRELNES…EAIEVIQKAL (88 aa)) folds into the Death domain. Serine 938 carries the post-translational modification Phosphoserine.

Active NF-kappa-B is a heterodimer of an about 50 kDa DNA-binding subunit and the weak DNA-binding subunit p65. Two heterodimers might form a labile tetramer. Generation of the NF-kappa-B p50 (Nuclear factor NF-kappa-B p50 subunit) transcription factor takes place both cotranslationally and post-translationally via non-mutually exclusive mechanisms. A cotranslational processing allows the production of both p50 and p105 (Nuclear factor NF-kappa-B p105 subunit) from a single NFKB1 mRNA. While translation occurs, the particular unfolded structure after the GRR repeat region acts as a substrate for the proteasome, promoting degradation of the C-terminus. The GRR acts as a proteasomal 'stop signal', protecting the region upstream of the GRR from degradation and promoting generation of p50. It is unclear if limited proteasome degradation during cotranslational processing depends on ubiquitination. NF-kappa-B p50 is also generated post-translationally following ubiquitination by the KPC complex, leading to limited processing by the proteasome downstream of the GRR region, thereby generating p50. Post-translationally, phosphorylation at the C-terminus by IKBKB/IKKB acts as a signal for ubiquitination and promotes either complete degradation or processing to generate the NF-kappa-B p50 (Nuclear factor NF-kappa-B p50 subunit). Phosphorylation at Ser-938 are required for BTRC/BTRCP-mediated ubiquitination and proteolysis. Phosphorylation at Ser-938 is also required for ubiquitination by the KPC complex and limited processing to generate NF-kappa-B p50 (Nuclear factor NF-kappa-B p50 subunit). In terms of processing, polyubiquitinated at multiple Lys residues in the C-terminus. Polyubiquitinated by the SCF(FBXW11) and SCF(BTRC) complexes following phosphorylation at Ser-938, leading to its complete degradation. In contrast, polyubiquitination by the KPC complex following phosphorylation at Ser-938 leads to limited proteosomal processing and generation of the active NF-kappa-B p50 (Nuclear factor NF-kappa-B p50 subunit). S-nitrosylation of Cys-66 affects DNA binding. Post-translationally, the covalent modification of cysteine by 15-deoxy-Delta12,14-prostaglandin-J2 is autocatalytic and reversible. It may occur as an alternative to other cysteine modifications, such as S-nitrosylation and S-palmitoylation.

It is found in the cytoplasm. It localises to the nucleus. Functionally, P105 is the precursor of the active p50 subunit (Nuclear factor NF-kappa-B p50 subunit) of the nuclear factor NF-kappa-B. The precursor protein itself does not bind to DNA. Acts as a cytoplasmic retention of attached NF-kappa-B proteins by p105. In terms of biological role, constitutes the active form, which associates with RELA/p65 to form the NF-kappa-B p65-p50 complex to form a transcription factor. Together with RELA/p65, binds to the kappa-B consensus sequence 5'-GGRNNYYCC-3', located in the enhancer region of genes involved in immune response and acute phase reactions. This chain is Nuclear factor NF-kappa-B p105 subunit (NFKB1), found in Gallus gallus (Chicken).